The primary structure comprises 1091 residues: Exonuclease/helicase subunit RexB (1091 aa).

Belongs to the helicase family. AddB/RexB type 2 subfamily. Heterodimer of RexA (AddA) and RexB. The cofactor is Mg(2+).

Involved in DNA double-strand break repair. Is not involved in recombination during natural competence or in plasmid establishment. Its function is as follows. The heterodimer acts as both an ATP-dependent DNA helicase and an ATP-dependent, dual-direction single-stranded exonuclease. Recognizes the chi site generating a DNA molecule suitable for the initiation of homologous recombination. This subunit has 5' -&gt; 3' nuclease activity but not helicase activity. The protein is Exonuclease/helicase subunit RexB of Streptococcus pneumoniae serotype 4 (strain ATCC BAA-334 / TIGR4).